Here is a 518-residue protein sequence, read N- to C-terminus: 3-octaprenyl-4-hydroxybenzoate carboxy-lyase (518 aa).

Asn-177 contributes to the Mn(2+) binding site. Prenylated FMN is bound by residues 180-182 (IYR), 194-196 (RWL), and 199-200 (RG). Residue Glu-243 coordinates Mn(2+). Asp-318 functions as the Proton donor in the catalytic mechanism.

This sequence belongs to the UbiD family. As to quaternary structure, homohexamer. Prenylated FMN serves as cofactor. The cofactor is Mn(2+).

It is found in the cell membrane. The enzyme catalyses a 4-hydroxy-3-(all-trans-polyprenyl)benzoate + H(+) = a 2-(all-trans-polyprenyl)phenol + CO2. Its pathway is cofactor biosynthesis; ubiquinone biosynthesis. Catalyzes the decarboxylation of 3-octaprenyl-4-hydroxy benzoate to 2-octaprenylphenol, an intermediate step in ubiquinone biosynthesis. The sequence is that of 3-octaprenyl-4-hydroxybenzoate carboxy-lyase from Burkholderia orbicola (strain AU 1054).